Here is a 239-residue protein sequence, read N- to C-terminus: MAVVTLSEMMEAGAHFGHQTRRWNPKMSRYIYCARNGVHIIDLVQTAICMNNAYKWTRSSARSGKRFLFVGTKKQASEVVALEATRCGASYVNQRWLGGMLTNWTTMKARIDRLKDLERMESSGAIAMRPKKEASVLRRELERLQKYLGGLKGMRRLPDVVVLVDQRRETNAVLEARKLDIPLVSMLDTNCDPDLCEVPIPCNDDAVRSVQLVLGRLADAINEGRHGTNEQRGADDNDD.

This sequence belongs to the universal ribosomal protein uS2 family.

This is Small ribosomal subunit protein uS2 from Prochlorococcus marinus (strain MIT 9303).